Here is a 498-residue protein sequence, read N- to C-terminus: NAD(P)H-quinone oxidoreductase chain 4, chloroplastic (498 aa).

Transmembrane regions (helical) follow at residues 4–24 (LPWLTLIVLFPFSASFLIPLL), 37–57 (LGICALEFLLITFTFCCQFHL), 87–107 (MGLILLTGFITTLAILAAWPV), 111–131 (VRLFYFLMLAMYSGQIGLFAS), 134–154 (ILLFFFMWELELIPVYLLLSM), 167–187 (FLLYTAGGSIFLLVGSLTMGL), 207–227 (IAVETALYFSFLIAYAVKLPI), 242–262 (HYSTCMLLAGILLKMGGYGLI), 274–294 (FLFSPLLVTMGAVQIAYASLI), 305–325 (IAYSSVSHMGFVIIGISSITD), 331–351 (AILQMISHGLIGAALFFLAGI), 386–406 (LALPGMSSFVAEFLIFLGIVT), 417–437 (IILFIGAIGVILTPIYLLSML), and 461–481 (IFISVFILLPILGIGIYPNLV).

The protein belongs to the complex I subunit 4 family.

Its subcellular location is the plastid. It is found in the chloroplast thylakoid membrane. It carries out the reaction a plastoquinone + NADH + (n+1) H(+)(in) = a plastoquinol + NAD(+) + n H(+)(out). It catalyses the reaction a plastoquinone + NADPH + (n+1) H(+)(in) = a plastoquinol + NADP(+) + n H(+)(out). The sequence is that of NAD(P)H-quinone oxidoreductase chain 4, chloroplastic from Psilotum nudum (Whisk fern).